The sequence spans 302 residues: Forkhead box protein R2 (302 aa).

A DNA-binding region (fork-head) is located at residues Arg-183–Ser-285.

The protein localises to the nucleus. This Mus musculus (Mouse) protein is Forkhead box protein R2 (Foxr2).